Here is a 527-residue protein sequence, read N- to C-terminus: DUF21 domain-containing protein At1g47330 (527 aa).

The Extracellular portion of the chain corresponds to 1-15; the sequence is MSSDIPCCGTTFSLY. In terms of domain architecture, CNNM transmembrane spans 8-191; sequence CGTTFSLYVV…GKGGDLTTDE (184 aa). A helical transmembrane segment spans residues 16–36; it reads VVIIIALVAFAGLMAGLTLGL. Over 37 to 70 the chain is Cytoplasmic; it reads MSLGLVDLEVLIKSGRPQDRINAGKIFPVVKNQH. A helical transmembrane segment spans residues 71-91; the sequence is LLLCTLLIGNSMAMEALPIFL. Topologically, residues 92–93 are extracellular; it reads DK. The helical transmembrane segment at 94-114 threads the bilayer; sequence IVPPWLAILLSVTLILVFGEI. Residues 115–126 are Cytoplasmic-facing; sequence MPQAVCTRYGLK. The chain crosses the membrane as a helical span at residues 127-147; that stretch reads VGAIMAPFVRVLLVLFFPISY. Residues 148–527 lie on the Extracellular side of the membrane; sequence PISKVLDWML…PKHEESTQTL (380 aa). 3 consecutive CBS domains span residues 210-271, 274-334, and 366-435; these read MTPI…EVPL, MSMR…TKDE, and KSEN…ILDE. Disordered stretches follow at residues 307 to 335, 358 to 384, and 464 to 527; these read KDLDEQEQSPETSENGIERRKNKKTKDEL, ETGDAKSGKSENGEEQQGSGKTSLLAA, and ITQS…TQTL. Position 315 is a phosphoserine (S315). Residues 358–369 are compositionally biased toward basic and acidic residues; the sequence is ETGDAKSGKSEN. A compositionally biased stretch (low complexity) spans 464 to 501; it reads ITQSSSGSTSPNQTSHMATPDSSPTTKPSNSSPTRKPS. N475 is a glycosylation site (N-linked (GlcNAc...) asparagine). The span at 502–515 shows a compositional bias: polar residues; it reads VSSPTREPSDSSHS. Positions 518–527 are enriched in basic and acidic residues; it reads PKHEESTQTL.

The protein localises to the membrane. The sequence is that of DUF21 domain-containing protein At1g47330 (CBSDUF7) from Arabidopsis thaliana (Mouse-ear cress).